Consider the following 325-residue polypeptide: Thioredoxin reductase (325 aa).

Residues 10 to 13 (SGPS), 39 to 40 (IA), Gln-44, Asn-53, Val-86, Cys-143, Asp-286, and 293 to 295 (RQA) contribute to the FAD site. Residues Cys-140 and Cys-143 are joined by a disulfide bond.

Belongs to the class-II pyridine nucleotide-disulfide oxidoreductase family. In terms of assembly, homodimer. It depends on FAD as a cofactor.

Its subcellular location is the cytoplasm. It carries out the reaction [thioredoxin]-dithiol + NADP(+) = [thioredoxin]-disulfide + NADPH + H(+). This Pneumocystis carinii protein is Thioredoxin reductase (TRR1).